Consider the following 214-residue polypeptide: Quinolone resistance pentapeptide repeat protein QnrB96 (214 aa).

2 consecutive Pentapeptide repeat domains span residues 23–103 (STFH…SFMN) and 116–189 (ITNT…VRGV).

The protein belongs to the pentapeptide repeat protein family.

Functionally, confers reduced sensitivity to the fluoroquinolone antibiotic ciprofloxacin (five-fold increase in minimum inhibitory concentration) when expressed in E.coli. In Scandinavium goeteborgense, this protein is Quinolone resistance pentapeptide repeat protein QnrB96.